A 238-amino-acid chain; its full sequence is Pyridoxine 5'-phosphate synthase (238 aa).

2 residues coordinate 3-amino-2-oxopropyl phosphate: Asn7 and Arg18. The active-site Proton acceptor is the His43. The 1-deoxy-D-xylulose 5-phosphate site is built by Arg45 and His50. The active-site Proton acceptor is Glu70. Thr100 provides a ligand contact to 1-deoxy-D-xylulose 5-phosphate. Catalysis depends on His190, which acts as the Proton donor. Residues Asp191 and 213–214 (GH) contribute to the 3-amino-2-oxopropyl phosphate site.

It belongs to the PNP synthase family. In terms of assembly, homooctamer; tetramer of dimers.

The protein localises to the cytoplasm. The catalysed reaction is 3-amino-2-oxopropyl phosphate + 1-deoxy-D-xylulose 5-phosphate = pyridoxine 5'-phosphate + phosphate + 2 H2O + H(+). It functions in the pathway cofactor biosynthesis; pyridoxine 5'-phosphate biosynthesis; pyridoxine 5'-phosphate from D-erythrose 4-phosphate: step 5/5. Its function is as follows. Catalyzes the complicated ring closure reaction between the two acyclic compounds 1-deoxy-D-xylulose-5-phosphate (DXP) and 3-amino-2-oxopropyl phosphate (1-amino-acetone-3-phosphate or AAP) to form pyridoxine 5'-phosphate (PNP) and inorganic phosphate. The chain is Pyridoxine 5'-phosphate synthase from Cytophaga hutchinsonii (strain ATCC 33406 / DSM 1761 / CIP 103989 / NBRC 15051 / NCIMB 9469 / D465).